The sequence spans 498 residues: Membrane-bound lytic murein transglycosylase F (498 aa).

The first 29 residues, 1-29, serve as a signal peptide directing secretion; it reads MFFKPDFRPRCAKWLIATGLFLMLGACVE. A non-LT domain region spans residues 30–267; sequence KPTTLERVKE…RLKDRYYGHV (238 aa). The interval 268-498 is LT domain; that stretch reads DVLGYVGAYT…SSSSTDESPL (231 aa). Glu-314 is an active-site residue. The tract at residues 464–498 is disordered; it reads VADGNLHVPGVDKTQPPVPPASPVPSSSSTDESPL.

It in the N-terminal section; belongs to the bacterial solute-binding protein 3 family. In the C-terminal section; belongs to the transglycosylase Slt family.

The protein resides in the cell outer membrane. It carries out the reaction Exolytic cleavage of the (1-&gt;4)-beta-glycosidic linkage between N-acetylmuramic acid (MurNAc) and N-acetylglucosamine (GlcNAc) residues in peptidoglycan, from either the reducing or the non-reducing ends of the peptidoglycan chains, with concomitant formation of a 1,6-anhydrobond in the MurNAc residue.. Functionally, murein-degrading enzyme that degrades murein glycan strands and insoluble, high-molecular weight murein sacculi, with the concomitant formation of a 1,6-anhydromuramoyl product. Lytic transglycosylases (LTs) play an integral role in the metabolism of the peptidoglycan (PG) sacculus. Their lytic action creates space within the PG sacculus to allow for its expansion as well as for the insertion of various structures such as secretion systems and flagella. This is Membrane-bound lytic murein transglycosylase F from Pseudomonas syringae pv. syringae (strain B728a).